Consider the following 464-residue polypeptide: tRNA-2-methylthio-N(6)-dimethylallyladenosine synthase (464 aa).

Positions 19–135 constitute an MTTase N-terminal domain; that stretch reads GSYWITTFGC…LENLLERVDL (117 aa). [4Fe-4S] cluster-binding residues include C28, C64, C98, C170, C174, and C177. One can recognise a Radical SAM core domain in the interval 156–393; the sequence is RDSSICGWVN…NELVETTSRK (238 aa). A TRAM domain is found at 396-464; sequence QRYLNNIESV…SFSLSGQIYK (69 aa).

This sequence belongs to the methylthiotransferase family. MiaB subfamily. In terms of assembly, monomer. Requires [4Fe-4S] cluster as cofactor.

It is found in the cytoplasm. It catalyses the reaction N(6)-dimethylallyladenosine(37) in tRNA + (sulfur carrier)-SH + AH2 + 2 S-adenosyl-L-methionine = 2-methylsulfanyl-N(6)-dimethylallyladenosine(37) in tRNA + (sulfur carrier)-H + 5'-deoxyadenosine + L-methionine + A + S-adenosyl-L-homocysteine + 2 H(+). Functionally, catalyzes the methylthiolation of N6-(dimethylallyl)adenosine (i(6)A), leading to the formation of 2-methylthio-N6-(dimethylallyl)adenosine (ms(2)i(6)A) at position 37 in tRNAs that read codons beginning with uridine. In Prochlorococcus marinus subsp. pastoris (strain CCMP1986 / NIES-2087 / MED4), this protein is tRNA-2-methylthio-N(6)-dimethylallyladenosine synthase.